Consider the following 3859-residue polypeptide: Transformation/transcription domain-associated protein (3859 aa).

An N-acetylalanine modification is found at Ala-2. The segment covering 491–526 has biased composition (pro residues); the sequence is PAAPGPAPSPAPVPAPPPPPPPPPPATPVTPAPVPP. Positions 491–541 are disordered; that stretch reads PAAPGPAPSPAPVPAPPPPPPPPPPATPVTPAPVPPFEKQGEKDKEDKQTF. Over residues 529–539 the composition is skewed to basic and acidic residues; it reads KQGEKDKEDKQ. Ser-1628 is modified (phosphoserine). The interaction with TP53 stretch occupies residues 2010–2388; that stretch reads SEVVIKWELQ…SPMAANQTPT (379 aa). Residues 2023–2044 form a disordered region; sequence DQQPDSDMDPNSSGEGVNSVSS. Over residues 2033-2044 the composition is skewed to low complexity; the sequence is NSSGEGVNSVSS. A Bipartite nuclear localization signal motif is present at residues 2047–2062; the sequence is KRGLSVDSAQEVKRFR. Phosphoserine is present on residues Ser-2051 and Ser-2077. Lys-2543 is covalently cross-linked (Glycyl lysine isopeptide (Lys-Gly) (interchain with G-Cter in SUMO2)). Residues 2543–2554 show a composition bias toward basic and acidic residues; that stretch reads KQEPRERENSES. The interval 2543 to 2578 is disordered; sequence KQEPRERENSESKEEDVEIDIELAPGDQTSTPKTKE. One can recognise an FAT domain in the interval 2692–3275; sequence VLKYLGKTHN…YFPIRTLYLT (584 aa). Residue Lys-3078 is modified to N6-acetyllysine. The PI3K/PI4K catalytic domain maps to 3500 to 3823; that stretch reads MPRVEIVQKH…AVTAIMTRLH (324 aa). The segment at 3506–3512 is G-loop; it reads VQKHNTA. Positions 3687 to 3695 are catalytic loop; sequence HLNRLNPEM. Residues 3707–3732 form an activation loop region; it reads VAYFRFDINDATGDLDANRPVPFRLT. An FATC domain is found at 3827-3859; the sequence is QFEGGESKVNTLVAAANSLDNLCRMDPAWHPWL.

Belongs to the PI3/PI4-kinase family. TRA1 subfamily. Interacts with MYC, E2F1 and E2F4 transcription factors. Interacts directly with p53/TP53. Interacts with GCN5L2. Component of various HAT complexes. Component of the PCAF complex, at least composed of TADA2L/ADA2, SUPT3H, TADA3L/ADA3, TAF5L/PAF65-beta, TAF6L/PAF65-alpha, TAF10/TAFII30, TAF12/TAFII20, TAF9/TAFII31 and TRRAP. Component of the TFTC-HAT complex, at least composed of TAF5L, TAF6L, TADA3L, SUPT3H/SPT3, TAF2/TAFII150, TAF4/TAFII135, TAF5/TAFII100, GCN5L2/GCN5, TAF10 and TRRAP. Component of the NuA4 histone acetyltransferase complex which contains the catalytic subunit KAT5/TIP60 and the subunits EP400, TRRAP/PAF400, BRD8/SMAP, EPC1, DMAP1/DNMAP1, RUVBL1/TIP49, RUVBL2, ING3, actin, ACTL6A/BAF53A, MORF4L1/MRG15, MORF4L2/MRGX, MRGBP, YEATS4/GAS41, VPS72/YL1 and MEAF6. Component of the STAGA complex, at least composed of SUPT3H, GCN5L2, SUPT7L, TAF5L, TAF6L, TADA3L, TAD1L, TAF10, TAF12, TRRAP and TAF9. The STAGA core complex is associated with a subcomplex required for histone deubiquitination composed of ATXN7L3, ENY2 and USP22. Component of the BAF53 complex, at least composed of BAF53A, RUVBL1, SMARCA4/BRG1, and TRRAP, which preferentially acetylates histone H4 (and H2A) within nucleosomes. Interacts with NPAT. Interaction with TELO2 and TTI1. Component of a SWR1-like complex.

The protein localises to the nucleus. Functionally, adapter protein, which is found in various multiprotein chromatin complexes with histone acetyltransferase activity (HAT), which gives a specific tag for epigenetic transcription activation. Component of the NuA4 histone acetyltransferase complex which is responsible for acetylation of nucleosomal histones H4 and H2A. Plays a central role in MYC transcription activation, and also participates in cell transformation by MYC. Required for p53/TP53-, E2F1- and E2F4-mediated transcription activation. Also involved in transcription activation mediated by the adenovirus E1A, a viral oncoprotein that deregulates transcription of key genes. Probably acts by linking transcription factors such as E1A, MYC or E2F1 to HAT complexes such as STAGA thereby allowing transcription activation. Probably not required in the steps following histone acetylation in processes of transcription activation. May be required for the mitotic checkpoint and normal cell cycle progression. Component of a SWR1-like complex that specifically mediates the removal of histone H2A.Z/H2AZ1 from the nucleosome. May play a role in the formation and maintenance of the auditory system. This Homo sapiens (Human) protein is Transformation/transcription domain-associated protein (TRRAP).